Consider the following 390-residue polypeptide: Argininosuccinate synthase (390 aa).

6 to 14 (AYSGGLDTT) contributes to the ATP binding site. An L-citrulline-binding site is contributed by Tyr-84. Gly-114 is an ATP binding site. The L-aspartate site is built by Thr-116, Asn-120, and Asp-121. Asn-120 contributes to the L-citrulline binding site. Residues Arg-124, Ser-171, Ser-180, Glu-253, and Tyr-265 each coordinate L-citrulline.

This sequence belongs to the argininosuccinate synthase family. Type 1 subfamily. In terms of assembly, homotetramer.

It localises to the cytoplasm. It carries out the reaction L-citrulline + L-aspartate + ATP = 2-(N(omega)-L-arginino)succinate + AMP + diphosphate + H(+). The protein operates within amino-acid biosynthesis; L-arginine biosynthesis; L-arginine from L-ornithine and carbamoyl phosphate: step 2/3. The protein is Argininosuccinate synthase of Sulfurisphaera tokodaii (strain DSM 16993 / JCM 10545 / NBRC 100140 / 7) (Sulfolobus tokodaii).